The primary structure comprises 369 residues: Pyrimidine monooxygenase RutA (369 aa).

FMN is bound by residues I49–K50, N115, E124, R140–Y141, and S190.

The protein belongs to the NtaA/SnaA/DszA monooxygenase family. RutA subfamily.

It catalyses the reaction uracil + FMNH2 + NADH + O2 = (Z)-3-ureidoacrylate + FMN + NAD(+) + H2O + H(+). The enzyme catalyses thymine + FMNH2 + NADH + O2 = (Z)-2-methylureidoacrylate + FMN + NAD(+) + H2O + H(+). Catalyzes the pyrimidine ring opening between N-3 and C-4 by an unusual flavin hydroperoxide-catalyzed mechanism, adding oxygen atoms in the process to yield ureidoacrylate peracid, that immediately reacts with FMN forming ureidoacrylate and FMN-N(5)-oxide. The FMN-N(5)-oxide reacts spontaneously with NADH to produce FMN. Requires the flavin reductase RutF to regenerate FMN in vivo. This is Pyrimidine monooxygenase RutA from Acinetobacter baylyi (strain ATCC 33305 / BD413 / ADP1).